A 957-amino-acid chain; its full sequence is SH3 domain-binding protein 4-B (957 aa).

In terms of domain architecture, SH3 1 spans 54-113; it reads ENVKEVVAIKDYCPNNFTTLKFSKGEHLYVLDASGGDWWYAHNTTEMGYIPSSYVQPLNY. In terms of domain architecture, ZU5 spans 312–449; sequence TSIVCRLDSS…LEPVMYVVMV (138 aa). The SH3 2 domain occupies 649–719; it reads TSLKYGKLIK…HAKNVLVVGK (71 aa).

Homodimer or homooligomer.

The protein localises to the membrane. Its subcellular location is the clathrin-coated pit. It is found in the cytoplasmic vesicle. It localises to the clathrin-coated vesicle. The protein resides in the nucleus. Possible role in regulating endocytosis of the transferrin receptor at the plasma membrane. Alternatively, may function as a negative regulator of the amino acid-induced TOR signaling by inhibiting the formation of active Rag GTPase complexes. Preferentially binds inactive Rag GTPase complexes and prevents their interaction with the mTORC1 complex inhibiting its relocalization to lysosomes and its activation. Thereby, may indirectly regulate cell growth, proliferation and autophagy. In Xenopus laevis (African clawed frog), this protein is SH3 domain-binding protein 4-B (sh3bp4-b).